The primary structure comprises 773 residues: Photosystem I P700 chlorophyll a apoprotein A1 (773 aa).

The tract at residues 1-27 is disordered; the sequence is MTISPPERGEKAKGAAPTPYDQPVDRD. The next 8 membrane-spanning stretches (helical) occupy residues 80 to 103, 166 to 189, 205 to 229, 315 to 333, 375 to 398, 414 to 440, 462 to 484, and 564 to 582; these read IFSA…FHGA, LMAL…YHYH, LQHH…HIGA, ISHH…GHMW, WHGQ…HHMY, LGLF…IAMI, AIIS…LYIH, and LMIH…LILL. 2 residues coordinate [4Fe-4S] cluster: Cys-606 and Cys-615. The next 2 membrane-spanning stretches (helical) occupy residues 622-643 and 687-709; these read HVFL…HFSW and ISMY…MFLF. His-698 is a binding site for divinylchlorophyll a'. The divinyl chlorophyll a site is built by Met-706 and Tyr-714. Trp-715 serves as a coordination point for phylloquinone. Residues 747 to 767 traverse the membrane as a helical segment; the sequence is AVGVAHFLLGGIATTWAFFHA.

This sequence belongs to the PsaA/PsaB family. The PsaA/B heterodimer binds the P700 divinyl chlorophyll special pair and subsequent electron acceptors. PSI consists of a core antenna complex that captures photons, and an electron transfer chain that converts photonic excitation into a charge separation. The cyanobacterial PSI reaction center is composed of one copy each of PsaA,B,C,D,E,F,I,J,K,L,M and X, and forms trimeric complexes. It depends on PSI electron transfer chain: 5 divinyl chlorophyll a, 1 divinyl chlorophyll a', 2 phylloquinones and 3 4Fe-4S clusters. PSI core antenna: 90 divinyl chlorophyll a, 22 carotenoids, 3 phospholipids and 1 galactolipid. P700 is a divinyl chlorophyll a/divinyl chlorophyll a' dimer, A0 is one or more divinylchlorophyll a, A1 is one or both phylloquinones and FX is a shared 4Fe-4S iron-sulfur center. as a cofactor.

Its subcellular location is the cellular thylakoid membrane. It catalyses the reaction reduced [plastocyanin] + hnu + oxidized [2Fe-2S]-[ferredoxin] = oxidized [plastocyanin] + reduced [2Fe-2S]-[ferredoxin]. PsaA and PsaB bind P700, the primary electron donor of photosystem I (PSI), as well as the electron acceptors A0, A1 and FX. PSI is a plastocyanin/cytochrome c6-ferredoxin oxidoreductase, converting photonic excitation into a charge separation, which transfers an electron from the donor P700 chlorophyll pair to the spectroscopically characterized acceptors A0, A1, FX, FA and FB in turn. Oxidized P700 is reduced on the lumenal side of the thylakoid membrane by plastocyanin or cytochrome c6. The chain is Photosystem I P700 chlorophyll a apoprotein A1 from Prochlorococcus marinus (strain SARG / CCMP1375 / SS120).